We begin with the raw amino-acid sequence, 149 residues long: Transcriptional repressor NrdR (149 aa).

A zinc finger lies at 3-34 (CPFCFAVDTKVIDSRLVGEGSSVRRRRQCLVC). In terms of domain architecture, ATP-cone spans 49–139 (PRVVKSNDVR…VYRSFEDIKE (91 aa)).

This sequence belongs to the NrdR family. Requires Zn(2+) as cofactor.

Negatively regulates transcription of bacterial ribonucleotide reductase nrd genes and operons by binding to NrdR-boxes. The chain is Transcriptional repressor NrdR from Klebsiella pneumoniae (strain 342).